A 356-amino-acid chain; its full sequence is ATP-dependent 6-phosphofructokinase (356 aa).

Residues glycine 15, lysine 78–glycine 79, and glycine 115–threonine 118 each bind ATP. Glutamate 116 contributes to the Mg(2+) binding site. Substrate contacts are provided by residues threonine 138–aspartate 140, arginine 175, methionine 182–arginine 184, glutamate 235, arginine 272, and histidine 278–arginine 281. Aspartate 140 (proton acceptor) is an active-site residue.

This sequence belongs to the phosphofructokinase type A (PFKA) family. Mixed-substrate PFK group III subfamily. In terms of assembly, homodimer or homotetramer. Mg(2+) serves as cofactor.

The protein localises to the cytoplasm. It carries out the reaction beta-D-fructose 6-phosphate + ATP = beta-D-fructose 1,6-bisphosphate + ADP + H(+). It participates in carbohydrate degradation; glycolysis; D-glyceraldehyde 3-phosphate and glycerone phosphate from D-glucose: step 3/4. Functionally, catalyzes the phosphorylation of D-fructose 6-phosphate to fructose 1,6-bisphosphate by ATP, the first committing step of glycolysis. The sequence is that of ATP-dependent 6-phosphofructokinase from Chloroflexus aurantiacus (strain ATCC 29366 / DSM 635 / J-10-fl).